Consider the following 257-residue polypeptide: UPF0246 protein Rpic_2164 (257 aa).

Belongs to the UPF0246 family.

The protein is UPF0246 protein Rpic_2164 of Ralstonia pickettii (strain 12J).